The following is a 564-amino-acid chain: MLANSASVRILIKGGKVVNDDCTHEADVYIENGIIQQVGRELMIPGGAKVIDATGKLVIPGGIDTSTHFHQTFMNATCVDDFYHGTKAALVGGTTMIIGHVLPDKETSLVEAYEKCRALADPKVCCDYALHVGITWWAPKVKAEMETLVREKGVNSFQMFMTYKDLYMLRDSELYQVFHACRDFGAIPRVHAENGELVAEGAKEALDLGITGPEGIEISHPEELEAEATHRVITIANRTHCPIYLVNVSSISAGDVIAAAKMQGKVVLAETTNAHATLTGLHYYHQDWSHAAAYVTVPPLRLDTNTSTYLMSLLANDTLNIVASDHRPFTTKQKAMGKEDFTKIPHGVSGVQDRMSVVWERGVVGGKMDENRFVAVTSSNAAKILNLYPRKGRIIPGADADVVVWDPEATKTISASTQVQGGDFNLYENMRCHGVPLVTISRGRVVYENGVFMCAEGTGKFCPLRSFPDIVYKKLVQREKTLKVRGVDRTPYLGDVAVVVNPGKKEMGTPLADTPTRPVTRHGGMRDLHESSFSLSGSQIDDHVPKRASARILAPPGGRSSGIW.

2 positions are modified to phosphothreonine: threonine 509 and threonine 514. A phosphoserine mark is found at serine 532 and serine 538. Omega-N-methylarginine is present on arginine 559.

This sequence belongs to the metallo-dependent hydrolases superfamily. Hydantoinase/dihydropyrimidinase family. As to quaternary structure, homotetramer, and heterotetramer with other DPYS-like proteins. Interacts with DPYSL2, DPYSL3 and DPYSL4. Interacts with MAP2 and TUBB3. In terms of tissue distribution, highly expressed in embryonic and early postnatal brain and spinal cord.

It is found in the cytoplasm. In terms of biological role, involved in the negative regulation of dendrite outgrowth. The sequence is that of Dihydropyrimidinase-related protein 5 (Dpysl5) from Rattus norvegicus (Rat).